The primary structure comprises 215 residues: ATP-dependent Clp protease proteolytic subunit (215 aa).

Ser111 serves as the catalytic Nucleophile. His136 is an active-site residue.

The protein belongs to the peptidase S14 family. In terms of assembly, fourteen ClpP subunits assemble into 2 heptameric rings which stack back to back to give a disk-like structure with a central cavity, resembling the structure of eukaryotic proteasomes.

It localises to the cytoplasm. It catalyses the reaction Hydrolysis of proteins to small peptides in the presence of ATP and magnesium. alpha-casein is the usual test substrate. In the absence of ATP, only oligopeptides shorter than five residues are hydrolyzed (such as succinyl-Leu-Tyr-|-NHMec, and Leu-Tyr-Leu-|-Tyr-Trp, in which cleavage of the -Tyr-|-Leu- and -Tyr-|-Trp bonds also occurs).. Functionally, cleaves peptides in various proteins in a process that requires ATP hydrolysis. Has a chymotrypsin-like activity. Plays a major role in the degradation of misfolded proteins. This Hamiltonella defensa subsp. Acyrthosiphon pisum (strain 5AT) protein is ATP-dependent Clp protease proteolytic subunit.